We begin with the raw amino-acid sequence, 165 residues long: Transcription antitermination protein NusB (165 aa).

The segment at 1–27 (MISDDTDQFNPRDAKSPEAAKGKSAKR) is disordered. Over residues 10–21 (NPRDAKSPEAAK) the composition is skewed to basic and acidic residues.

It belongs to the NusB family.

Functionally, involved in transcription antitermination. Required for transcription of ribosomal RNA (rRNA) genes. Binds specifically to the boxA antiterminator sequence of the ribosomal RNA (rrn) operons. This is Transcription antitermination protein NusB from Pseudomonas savastanoi pv. phaseolicola (strain 1448A / Race 6) (Pseudomonas syringae pv. phaseolicola (strain 1448A / Race 6)).